The following is a 106-amino-acid chain: uncharacterized protein (106 aa).

Residues 1–25 (MSVIKKNIPAIGLCICAFFIHSAVG) form the signal peptide.

The protein to the N-terminal of the FimA/PapA family of fimbria proteins.

This is an uncharacterized protein from Salmonella typhi.